The following is a 421-amino-acid chain: UPF0415 protein C7orf25 homolog (421 aa).

Belongs to the UPF0415 family.

The chain is UPF0415 protein C7orf25 homolog from Bos taurus (Bovine).